Consider the following 313-residue polypeptide: MKKLNIIFAGTPDISAQVLKDLYKSQHNIQAVLTQPDRAKGRGKKVQFSPVKEVALANHTPVFQPLSFKKNPEVLEQIKQLKPDVIVVIAYGIIVPQEFLDIARYGCLNIHVSLLPKWRGAAPIQRAIQAGDTKTGICIMQMDAGLDTGDILNTLEIEIQETDTSQTLHDKFAKLSIKPLLETLEKIEIIKPEPQQGEPSYAHKITKQEGLIDFTKSAWQISCHIRAFTPWPGAYFILDDEAIKVGEFEILYQNTDNRKAGTIIDIDRSGFDIATSDKIIRFRQLQFPNKKMLNIVDILNGKDLDKYIGYKLG.

113-116 contacts (6S)-5,6,7,8-tetrahydrofolate; it reads SLLP.

This sequence belongs to the Fmt family.

It carries out the reaction L-methionyl-tRNA(fMet) + (6R)-10-formyltetrahydrofolate = N-formyl-L-methionyl-tRNA(fMet) + (6S)-5,6,7,8-tetrahydrofolate + H(+). Attaches a formyl group to the free amino group of methionyl-tRNA(fMet). The formyl group appears to play a dual role in the initiator identity of N-formylmethionyl-tRNA by promoting its recognition by IF2 and preventing the misappropriation of this tRNA by the elongation apparatus. In Francisella tularensis subsp. novicida (strain U112), this protein is Methionyl-tRNA formyltransferase.